The primary structure comprises 447 residues: Sensor protein VanSB (447 aa).

Transmembrane regions (helical) follow at residues 10–30 and 137–155; these read VFSY…TLFA and GIVM…AYIF. An HAMP domain is found at 157–208; sequence RQMTTPIKALADSANKMANLKEVPPPLERKDELGALAHDMHSMYIRLKETIA. In terms of domain architecture, Histidine kinase spans 230–445; that stretch reads AASHELKTPI…LFWLDLPPTS (216 aa). Histidine 233 is modified (phosphohistidine; by autocatalysis).

The protein localises to the cell membrane. The catalysed reaction is ATP + protein L-histidine = ADP + protein N-phospho-L-histidine.. Its function is as follows. Member of the two-component regulatory system VanSB/VanRB. Activates the transcription of vanSB, vanYB and vanW in response to vancomycin which results in vancomycin resistance. VanSB may activate VanRB by phosphorylation. May also act as a phospho-VanRB phosphatase. This is Sensor protein VanSB (vanSB) from Enterococcus faecalis (strain ATCC 700802 / V583).